The primary structure comprises 299 residues: MAAAEEGCSVGAEADRELEELLESALDDFDKAKPSPAPPSTTTAPDASGPQKRSPGDTAKDALFASQEKFFQELFDSELASQATAEFEKAMKELAEEEPHLVEQFQKLSEAAGRVGSDMTSQQEFTSCLKETLSGLAKNATDLQNSSMSEEELTKAMEGLGMDEGDGEGNILPIMQSIMQNLLSKDVLYPSLKEITEKYPEWLQSHRESLPPEQFEKYQEQHSVMCKICEQFEAETPTDSETTQKARFEMVLDLMQQLQDLGHPPKELAGEMPPGLNFDLDALNLSGPPGASGEQCLIM.

The disordered stretch occupies residues 1–63 (MAAAEEGCSV…SPGDTAKDAL (63 aa)). Ala-2 is subject to N-acetylalanine. Positions 2–56 (AAAEEGCSVGAEADRELEELLESALDDFDKAKPSPAPPSTTTAPDASGPQKRSPG) are docking to the peroxisome membrane and binding to PEX3. Residues 2–91 (AAAEEGCSVG…QATAEFEKAM (90 aa)) are necessary for PEX19 function on peroxisome biogenesis. Positions 16–27 (RELEELLESALD) are enriched in acidic residues. Phosphoserine occurs at positions 35, 54, and 66. Thr-236 carries the post-translational modification Phosphothreonine. Cys-296 carries the cysteine methyl ester modification. A lipid anchor (S-farnesyl cysteine) is attached at Cys-296. A propeptide spans 297–299 (LIM) (removed in mature form).

It belongs to the peroxin-19 family. Interacts with a broad range of peroxisomal membrane proteins, including PEX3, PEX10, PEX11A, PEX11B, PEX12, PEX13, PEX14 and PEX16, PXMP2/PMP22, PXMP4/PMP24, SLC25A17/PMP34, ABCD1/ALDP, ABCD2/ALDRP, and ABCD3/PMP70. Also interacts with the tumor suppressor CDKN2A/p19ARF. As to quaternary structure, (Microbial infection) Interacts with human cytomegalovirus protein UL37 isoform vMIA; this interaction inhibits the peroxisomal-dependent antiviral signaling. Ubiquitously expressed. Isoform 1 is strongly predominant in all tissues except in utero where isoform 2 is the main form.

The protein resides in the cytoplasm. It localises to the peroxisome membrane. In terms of biological role, necessary for early peroxisomal biogenesis. Acts both as a cytosolic chaperone and as an import receptor for peroxisomal membrane proteins (PMPs). Binds and stabilizes newly synthesized PMPs in the cytoplasm by interacting with their hydrophobic membrane-spanning domains, and targets them to the peroxisome membrane by binding to the integral membrane protein PEX3. Excludes CDKN2A from the nucleus and prevents its interaction with MDM2, which results in active degradation of TP53. The chain is Peroxisomal biogenesis factor 19 from Homo sapiens (Human).